The chain runs to 30 residues: Photosystem I reaction center subunit XII (30 aa).

A helical transmembrane segment spans residues 6–26 (VFTILAIALVPAVMALLLGSA).

This sequence belongs to the PsaM family.

The protein resides in the cellular thylakoid membrane. This Synechococcus sp. (strain JA-2-3B'a(2-13)) (Cyanobacteria bacterium Yellowstone B-Prime) protein is Photosystem I reaction center subunit XII.